The chain runs to 152 residues: Lipoprotein signal peptidase (152 aa).

Transmembrane regions (helical) follow at residues N55–M75 and L85–F105. Active-site residues include D111 and D129. A helical membrane pass occupies residues V124 to L144.

It belongs to the peptidase A8 family.

It localises to the cell membrane. It carries out the reaction Release of signal peptides from bacterial membrane prolipoproteins. Hydrolyzes -Xaa-Yaa-Zaa-|-(S,diacylglyceryl)Cys-, in which Xaa is hydrophobic (preferably Leu), and Yaa (Ala or Ser) and Zaa (Gly or Ala) have small, neutral side chains.. The protein operates within protein modification; lipoprotein biosynthesis (signal peptide cleavage). Functionally, this protein specifically catalyzes the removal of signal peptides from prolipoproteins. The polypeptide is Lipoprotein signal peptidase (Bacillus cytotoxicus (strain DSM 22905 / CIP 110041 / 391-98 / NVH 391-98)).